The primary structure comprises 325 residues: Lipoyl synthase (325 aa).

A disordered region spans residues 1–33 (MATVIDTLKARGSEDRAARHPEKQNRPDTPVLR). A compositionally biased stretch (basic and acidic residues) spans 8 to 33 (LKARGSEDRAARHPEKQNRPDTPVLR). C64, C69, C75, C90, C94, C97, and S303 together coordinate [4Fe-4S] cluster. The Radical SAM core domain occupies 76–292 (WSQKHATMMI…EAIARAKGFL (217 aa)).

Belongs to the radical SAM superfamily. Lipoyl synthase family. It depends on [4Fe-4S] cluster as a cofactor.

It is found in the cytoplasm. The catalysed reaction is [[Fe-S] cluster scaffold protein carrying a second [4Fe-4S](2+) cluster] + N(6)-octanoyl-L-lysyl-[protein] + 2 oxidized [2Fe-2S]-[ferredoxin] + 2 S-adenosyl-L-methionine + 4 H(+) = [[Fe-S] cluster scaffold protein] + N(6)-[(R)-dihydrolipoyl]-L-lysyl-[protein] + 4 Fe(3+) + 2 hydrogen sulfide + 2 5'-deoxyadenosine + 2 L-methionine + 2 reduced [2Fe-2S]-[ferredoxin]. It participates in protein modification; protein lipoylation via endogenous pathway; protein N(6)-(lipoyl)lysine from octanoyl-[acyl-carrier-protein]: step 2/2. Functionally, catalyzes the radical-mediated insertion of two sulfur atoms into the C-6 and C-8 positions of the octanoyl moiety bound to the lipoyl domains of lipoate-dependent enzymes, thereby converting the octanoylated domains into lipoylated derivatives. The sequence is that of Lipoyl synthase from Caulobacter vibrioides (strain ATCC 19089 / CIP 103742 / CB 15) (Caulobacter crescentus).